The primary structure comprises 162 residues: Corticoliberin (162 aa).

The first 24 residues, 1–24 (MKLNFLVTTVALLVAFPPPYECRA), serve as a signal peptide directing secretion. A propeptide spanning residues 25–119 (IEGSSNQPAT…ALDSVERERR (95 aa)) is cleaved from the precursor. At phenylalanine 160 the chain carries Phenylalanine amide.

This sequence belongs to the sauvagine/corticotropin-releasing factor/urotensin I family.

It localises to the secreted. In terms of biological role, this hormone from hypothalamus regulates the release of corticotropin from pituitary gland. This Carassius auratus (Goldfish) protein is Corticoliberin (crh).